Here is a 218-residue protein sequence, read N- to C-terminus: Large ribosomal subunit protein uL3 (218 aa).

A disordered region spans residues 126 to 170; that stretch reads HGFSRGPMSHGSKNHREPGSTGAGTTPGRIYPGKRMAGRYGGKKR.

Belongs to the universal ribosomal protein uL3 family. As to quaternary structure, part of the 50S ribosomal subunit. Forms a cluster with proteins L14 and L19.

Functionally, one of the primary rRNA binding proteins, it binds directly near the 3'-end of the 23S rRNA, where it nucleates assembly of the 50S subunit. This Prochlorococcus marinus (strain MIT 9313) protein is Large ribosomal subunit protein uL3.